The sequence spans 576 residues: Probable proline--tRNA ligase, mitochondrial (576 aa).

It belongs to the class-II aminoacyl-tRNA synthetase family.

The protein resides in the mitochondrion. It carries out the reaction tRNA(Pro) + L-proline + ATP = L-prolyl-tRNA(Pro) + AMP + diphosphate. The protein is Probable proline--tRNA ligase, mitochondrial (AIM10) of Saccharomyces cerevisiae (strain ATCC 204508 / S288c) (Baker's yeast).